A 239-amino-acid polypeptide reads, in one-letter code: Ribose-5-phosphate isomerase A (239 aa).

Substrate-binding positions include 40-43 (SGST), 96-99 (DGAD), and 110-113 (KGGG). The Proton acceptor role is filled by Glu-119. Residue Lys-137 coordinates substrate.

Belongs to the ribose 5-phosphate isomerase family. Homodimer.

The catalysed reaction is aldehydo-D-ribose 5-phosphate = D-ribulose 5-phosphate. Its pathway is carbohydrate degradation; pentose phosphate pathway; D-ribose 5-phosphate from D-ribulose 5-phosphate (non-oxidative stage): step 1/1. In terms of biological role, catalyzes the reversible conversion of ribose-5-phosphate to ribulose 5-phosphate. This is Ribose-5-phosphate isomerase A from Methanococcus maripaludis (strain C6 / ATCC BAA-1332).